Consider the following 74-residue polypeptide: Mitochondrial import receptor subunit TOM6 homolog (74 aa).

Over residues 1–20 the composition is skewed to low complexity; that stretch reads MASSGVTVSAAGSASEASEV. The interval 1–21 is disordered; it reads MASSGVTVSAAGSASEASEVP. Ala-2 is subject to N-acetylalanine.

Belongs to the Tom6 family. Forms part of the preprotein translocase complex of the outer mitochondrial membrane (TOM complex) which consists of at least 7 different proteins (TOMM5, TOMM6, TOMM7, TOMM20, TOMM22, TOMM40 and TOMM70).

The protein localises to the mitochondrion outer membrane. The chain is Mitochondrial import receptor subunit TOM6 homolog (Tomm6) from Mus musculus (Mouse).